The sequence spans 201 residues: Syndecan-2 (201 aa).

A signal peptide spans 1–18 (MRRAWILLTLGLVACVSA). Residues 19 to 144 (ESRAELTSDK…HSDSLFKRTE (126 aa)) are Extracellular-facing. Residues Ser41, Ser55, and Ser57 are each glycosylated (O-linked (Xyl...) (glycosaminoglycan) serine). Disordered stretches follow at residues 42–70 (GVYP…ELTT) and 90–130 (TLNI…DTNV). A compositionally biased stretch (polar residues) spans 90–102 (TLNIQNKIPAQTK). O-linked (GalNAc...) threonine glycosylation is present at Thr101. The segment covering 103–123 (SPEETDKEKVHLSDSERKMDP) has biased composition (basic and acidic residues). The residue at position 115 (Ser115) is a Phosphoserine; by FAM20C. Residues 145–169 (VLAAVIAGGVIGFLFAIFLILLLVY) traverse the membrane as a helical segment. The Cytoplasmic portion of the chain corresponds to 170 to 201 (RMRKKDEGSYDLGERKPSSAAYQKAPTKEFYA). The interval 178 to 201 (SYDLGERKPSSAAYQKAPTKEFYA) is disordered. Phosphoserine is present on Ser187.

It belongs to the syndecan proteoglycan family. In terms of assembly, interacts (via cytoplasmic domain) with SARM1. Forms a complex with SDCBP and PDCD6IP. O-glycosylated with core 1 or possibly core 8 glycans. Contains heparan sulfate. Also contains chondroitin sulfate.

It localises to the membrane. Cell surface proteoglycan which regulates dendritic arbor morphogenesis. In Homo sapiens (Human), this protein is Syndecan-2 (SDC2).